A 703-amino-acid polypeptide reads, in one-letter code: WPP domain-interacting tail-anchored protein 1 (703 aa).

Residues 1–12 (METETEHDRTVS) are compositionally biased toward basic and acidic residues. 2 disordered regions span residues 1 to 27 (METETEHDRTVSVDDNDSLVPEPSSTK) and 86 to 107 (FVSKKEEDEEEPSSNVDDDDDS). Acidic residues predominate over residues 92 to 107 (EDEEEPSSNVDDDDDS). A coiled-coil region spans residues 118 to 183 (SSILNSEVKE…MEQVVEMKKQ (66 aa)). Positions 189 to 208 (RLSSGLDEQGSWSGGQTSVS) are disordered. Polar residues predominate over residues 198–208 (GSWSGGQTSVS). 3 coiled-coil regions span residues 236–265 (LEKSLAKEMELEKKLSESRNTERELEMKLY), 318–461 (KRED…RDKG), and 500–604 (STVS…SREN). Residues 679–699 (FKHILVAILVILISSIAYVIS) traverse the membrane as a helical segment.

In terms of assembly, homodimer. Component of Ran complexes at least composed of WIT1 or WIT2, RANGAP1 or RANGAP2, and WIP1 or WIP2 or WIP3. Interacts with WIP2, WPP1/MAF1, WPP2/MAF2, RANGAP1 and RANGAP2. Component of a ternary complex composed of WPP1, HSP70-1 and WIT1. Interacts with KAKU1. Interacts with WIP1. Ubiquitous.

It localises to the nucleus envelope. The protein resides in the nucleus membrane. Its function is as follows. Together with WIT2, required for the nuclear envelope docking of RANGAP proteins in root tips. The chain is WPP domain-interacting tail-anchored protein 1 (WIT1) from Arabidopsis thaliana (Mouse-ear cress).